Here is a 93-residue protein sequence, read N- to C-terminus: Large ribosomal subunit protein uL23 (93 aa).

Belongs to the universal ribosomal protein uL23 family. As to quaternary structure, part of the 50S ribosomal subunit. Contacts protein L29, and trigger factor when it is bound to the ribosome.

Functionally, one of the early assembly proteins it binds 23S rRNA. One of the proteins that surrounds the polypeptide exit tunnel on the outside of the ribosome. Forms the main docking site for trigger factor binding to the ribosome. This chain is Large ribosomal subunit protein uL23, found in Helicobacter acinonychis (strain Sheeba).